A 136-amino-acid polypeptide reads, in one-letter code: Ribosome-binding factor A (136 aa).

This sequence belongs to the RbfA family. In terms of assembly, monomer. Binds 30S ribosomal subunits, but not 50S ribosomal subunits or 70S ribosomes.

It is found in the cytoplasm. In terms of biological role, one of several proteins that assist in the late maturation steps of the functional core of the 30S ribosomal subunit. Associates with free 30S ribosomal subunits (but not with 30S subunits that are part of 70S ribosomes or polysomes). Required for efficient processing of 16S rRNA. May interact with the 5'-terminal helix region of 16S rRNA. The chain is Ribosome-binding factor A from Cellvibrio japonicus (strain Ueda107) (Pseudomonas fluorescens subsp. cellulosa).